Here is a 165-residue protein sequence, read N- to C-terminus: UPF0303 protein BMA1246 (165 aa).

The protein belongs to the UPF0303 family.

This is UPF0303 protein BMA1246 from Burkholderia mallei (strain ATCC 23344).